A 170-amino-acid polypeptide reads, in one-letter code: UPF0316 protein CLJ_B0679 (170 aa).

2 helical membrane-spanning segments follow: residues 1–21 (MLSY…LMTI) and 36–56 (IIGF…LSGI).

It belongs to the UPF0316 family.

Its subcellular location is the cell membrane. The chain is UPF0316 protein CLJ_B0679 from Clostridium botulinum (strain 657 / Type Ba4).